The primary structure comprises 63 residues: Large ribosomal subunit protein bL28 (63 aa).

Belongs to the bacterial ribosomal protein bL28 family.

The sequence is that of Large ribosomal subunit protein bL28 from Geobacter metallireducens (strain ATCC 53774 / DSM 7210 / GS-15).